The sequence spans 931 residues: Protein unc-45 homolog B (931 aa).

TPR repeat units follow at residues 6-39, 43-76, and 77-110; these read AAQLKEEGNRHFQLQDYKAATKSYSQALKLTKDK, ATLYRNRAACGLKMESYAQAASDASRAIDINSAD, and IKALYRRCQALEHLGKLDQAFKDVQRCATLEPRN. ARM repeat units follow at residues 169 to 208, 211 to 250, and 751 to 790; these read EAGAERIFQSNGVALLLQLMNTQRPELLLAAVRTLSGMCS, RARATAILHAVRIDRICSLMALENEEMSLAVCNLLQAIID, and DKLRQKIFKEKALPDIENYMFENHDQLRQAATECMCNMVL.

As to quaternary structure, interacts with HSP90 in an ATP-independent manner. Interacts with UBE4B; the interaction may target UNC45B for proteasomal degradation. In terms of tissue distribution, highly expressed in adult skeletal muscle and heart. Detected at intermediate levels in lung. Highly expressed in embryonic heart.

It localises to the cytoplasm. It is found in the myofibril. The protein resides in the sarcomere. The protein localises to the z line. Its subcellular location is the a band. It localises to the perinuclear region. It is found in the cytosol. Its function is as follows. Acts as a co-chaperone for HSP90 and is required for proper folding of the myosin motor domain. Plays a role in sarcomere formation during muscle cell development. Is necessary for normal early lens development. In Mus musculus (Mouse), this protein is Protein unc-45 homolog B (Unc45b).